A 366-amino-acid chain; its full sequence is Spermidine/putrescine import ATP-binding protein PotA (366 aa).

The ABC transporter domain maps to 8-239 (IRFENVTKQF…PINKFVADFI (232 aa)). An ATP-binding site is contributed by 41-48 (GPSGCGKT).

This sequence belongs to the ABC transporter superfamily. Spermidine/putrescine importer (TC 3.A.1.11.1) family. As to quaternary structure, the complex is composed of two ATP-binding proteins (PotA), two transmembrane proteins (PotB and PotC) and a solute-binding protein (PotD).

The protein resides in the cell membrane. It catalyses the reaction ATP + H2O + polyamine-[polyamine-binding protein]Side 1 = ADP + phosphate + polyamineSide 2 + [polyamine-binding protein]Side 1.. Its function is as follows. Part of the ABC transporter complex PotABCD involved in spermidine/putrescine import. Responsible for energy coupling to the transport system. The protein is Spermidine/putrescine import ATP-binding protein PotA of Listeria innocua serovar 6a (strain ATCC BAA-680 / CLIP 11262).